The sequence spans 373 residues: Coiled-coil domain-containing protein 34 (373 aa).

Disordered stretches follow at residues 1-112 and 118-137; these read MWAA…SLRG and CAST…QVRL. S52 carries the post-translational modification Phosphoserine. Residues 61-76 show a composition bias toward polar residues; that stretch reads NSTRSLLSPLGHQSFQ. Residues 77–101 show a composition bias toward acidic residues; the sequence is FDEDDGDGEDEEDVDDEEDVDEDAH. Residues 152 to 286 are a coiled coil; it reads KEKEERDRLQ…QEWLENAKHK (135 aa). Residues 324–352 form a disordered region; that stretch reads IHMPPPKEAKDLSGRKSKRPVISQPHKSS. Basic and acidic residues predominate over residues 328-337; that stretch reads PPKEAKDLSG.

As to expression, expressed in sperm.

The protein resides in the cell projection. The protein localises to the cilium. It is found in the flagellum. In terms of biological role, involved in spermatogenesis. Has a probable role in anterograde intraflagellar transport which is essential for the formation of sperm flagella. In Homo sapiens (Human), this protein is Coiled-coil domain-containing protein 34 (CCDC34).